Reading from the N-terminus, the 1201-residue chain is Potassium/sodium hyperpolarization-activated cyclic nucleotide-gated channel 4 (1201 aa).

The Cytoplasmic segment spans residues 1–263; that stretch reads MDKLPPSMRK…IIHPYSDFRF (263 aa). A disordered region spans residues 24–183; sequence WIMDEEEDGE…PASASCEQPS (160 aa). A compositionally biased stretch (acidic residues) spans 26 to 36; that stretch reads MDEEEDGEEEG. Gly residues predominate over residues 105-118; the sequence is SRGGGSGGAGGGSS. Residues 121–132 show a composition bias toward basic and acidic residues; that stretch reads HLHDSAEERRLI. A Phosphoserine modification is found at S139. Pro residues predominate over residues 164–174; that stretch reads ASPPPQQPPQP. An involved in subunit assembly region spans residues 209-260; that stretch reads GQSGFMQRQFGAMLQPGVNKFSLRMFGSQKAVEREQERVKSAGFWIIHPYSD. Residues 264 to 286 traverse the membrane as a helical segment; the sequence is YWDLTMLLLMVGNLIIIPVGITF. The Extracellular portion of the chain corresponds to 287–293; it reads FKDENTT. The helical transmembrane segment at 294–314 threads the bilayer; sequence PWIVFNVVSDTFFLIDLVLNF. Over 315 to 336 the chain is Cytoplasmic; sequence RTGIVVEDNTEIILDPQRIKMK. A helical membrane pass occupies residues 337–359; the sequence is YLKSWFVVDFISSIPVDYIFLIV. The Extracellular portion of the chain corresponds to 360–378; that stretch reads ETRIDSEVYKTARALRIVR. Residues 379–399 traverse the membrane as a helical; Voltage-sensor segment; the sequence is FTKILSLLRLLRLSRLIRYIH. Residues 400 to 413 lie on the Cytoplasmic side of the membrane; it reads QWEEIFHMTYDLAS. Residues 414-436 traverse the membrane as a helical segment; sequence AVVRIVNLIGMMLLLCHWDGCLQ. Over 437 to 464 the chain is Extracellular; the sequence is FLVPMLQDFPHDCWVSINGMVNNSWGKQ. N-linked (GlcNAc...) asparagine glycosylation occurs at N458. The pore-forming intramembrane region spans 465 to 486; the sequence is YSYALFKAMSHMLCIGYGRQAP. The Extracellular segment spans residues 487–491; the sequence is VGMSD. Residues 492–517 form a helical membrane-spanning segment; sequence VWLTMLSMIVGATCYAMFIGHATALI. The Cytoplasmic segment spans residues 518–1201; that stretch reads QSLDSSRRQY…PVRSKLPSNL (684 aa). The 3',5'-cyclic GMP site is built by Y559, K562, F564, and E566. 3',5'-cyclic AMP is bound by residues G659, E660, C662, R669, T670, V673, and R710. Disordered regions lie at residues 804–902 and 914–1201; these read AIFR…TAAA and ALGG…PSNL. Composition is skewed to low complexity over residues 831-856 and 866-880; these read SLIP…SSSS and SAPP…SSSS. Pro residues predominate over residues 881–894; it reads SPPPGACGSPPAPT. Low complexity-rich tracts occupy residues 915-939 and 967-995; these read LGGS…SPQA and RSPS…SSTP. Positions 1029–1042 are enriched in pro residues; the sequence is GHSPGPPRTFPSAP. Over residues 1045-1056 the composition is skewed to low complexity; that stretch reads ASGSHGSLLLPP. 2 positions are modified to phosphoserine: S1105 and S1108. Residues 1122–1134 are compositionally biased toward gly residues; that stretch reads AGGGSGSSGGLGP.

This sequence belongs to the potassium channel HCN family. As to quaternary structure, homotetramer. The potassium channel is composed of a homo- or heterotetrameric complex of pore-forming subunits. Interacts with PEX5L with a 4:4 HCN4:PEX5L stoichiometry; reduces the effects of cAMP on the voltage-dependence and rate of activation. Interacts with IRAG1; regulates HCN4 channel activity. Interacts with IRAG2; regulates HCN4 channel activity. Post-translationally, S-palmitoylated. Detected in a subset of elongated cells in taste buds.

It localises to the cell membrane. It catalyses the reaction K(+)(in) = K(+)(out). It carries out the reaction Na(+)(in) = Na(+)(out). Its activity is regulated as follows. Activated by cAMP, and to a lesser extent by cGMP and cCMP. cAMP binding causes a conformation change that leads to the assembly of an active tetramer and channel opening. Binding of cAMP removes a tonic inhibition conferred by cyclic nucleotide-binding domain (CNBD) on channel opening. Cyclic dinucleotides can modulate HCN4 channel; cyclic dinucleotides acting as potent antagonists of cAMP. Inhibited by extracellular Cs(+) ions. Auxiliary subunits can also regulate HCN4 channel. IRAG1 causes a gain-of-function by shifting HCN4 activation to more depolarized membrane potentials in the absence of cAMP. In contrast, IRAG2 causes a loss-of-function by inhibiting cAMP-dependent potentiation of HCN4 activation. In terms of biological role, hyperpolarization-activated ion channel that are permeable to Na(+) and K(+) ions with very slow activation and inactivation. Exhibits higher selectivity for K(+) over Na(+) ions. Contributes to the native pacemaker currents in heart (If) that regulate the rhythm of heart beat. Contributes to the native pacemaker currents in neurons (Ih). May mediate responses to sour stimuli. This chain is Potassium/sodium hyperpolarization-activated cyclic nucleotide-gated channel 4 (Hcn4), found in Mus musculus (Mouse).